The following is a 239-amino-acid chain: MPKSKRDKKVSLTKTAKKGLELKQNLIEELRKCVDTYKYLFIFSVANMRNSKLKDIRNAWKHSRMFFGKNKVMMVALGRSPSDEYKDNLHQVSKRLRGEVGLLFTNRTKEEVNEWFTKYTEMDYARAGNKAAFTVSLDPGPLEQFPHSMEPQLRQLGLPTALKRGVVTLLSDYEVCKEGDVLTPEQARVLKLFGYEMAEFKVTIKYMWDSQSGRFQQMGDDLPESASESTEESDSEDDD.

Positions 215-239 (FQQMGDDLPESASESTEESDSEDDD) are disordered. Phosphoserine is present on residues serine 225, serine 229, and serine 233. Residues 229–239 (STEESDSEDDD) are compositionally biased toward acidic residues.

Belongs to the universal ribosomal protein uL10 family. Associates with the pre-60S ribosomal particle. Interacts with MINAS-60 (product of an alternative open reading frame of RBM10).

The protein localises to the nucleus. It is found in the nucleolus. The protein resides in the cytoplasm. Functionally, component of the ribosome assembly machinery. Nuclear paralog of the ribosomal protein P0, it binds pre-60S subunits at an early stage of assembly in the nucleolus, and is replaced by P0 in cytoplasmic pre-60S subunits and mature 80S ribosomes. The sequence is that of mRNA turnover protein 4 homolog (MRTO4) from Homo sapiens (Human).